A 629-amino-acid chain; its full sequence is Kelch-like protein 8 (629 aa).

A compositionally biased stretch (polar residues) spans 1–10 (MASESTNGKQ). The segment at 1–40 (MASESTNGKQARSHVTKGRRQYQHQHQQQQQQQQQVRSRS) is disordered. Alanine 2 bears the N-acetylalanine mark. Residues 11–23 (ARSHVTKGRRQYQ) are compositionally biased toward basic residues. The segment covering 24–35 (HQHQQQQQQQQQ) has biased composition (low complexity). The BTB domain occupies 76 to 143 (CDVTLKVGSK…VYSSRLTLTV (68 aa)). Residues 178–279 (CLAVRAFAES…LPVDFLMGVV (102 aa)) form the BACK domain. 6 Kelch repeats span residues 328–375 (VLFC…SVEG), 376–422 (KVYA…SLGG), 424–469 (IYAI…ALIN), 471–516 (VYAV…ELHG), 517–563 (CLYV…TVMG), and 565–610 (IFAV…VCDC).

Component of the BCR(KLHL8) E3 ubiquitin ligase complex, at least composed of CUL3, KLHL8 and RBX1. Interacts with RAPSN.

It participates in protein modification; protein ubiquitination. In terms of biological role, substrate-specific adapter of a BCR (BTB-CUL3-RBX1) E3 ubiquitin ligase complex required for The BCR(KLHL8) ubiquitin ligase complex mediates ubiquitination and degradation of RAPSN. In Mus musculus (Mouse), this protein is Kelch-like protein 8 (Klhl8).